We begin with the raw amino-acid sequence, 748 residues long: Structure-specific endonuclease subunit SLX4 (748 aa).

Residues 50-102 (LSSDDDSISTQVKSVTAQKSPITQETTKNDTERNKDVDKSCNPVSTSQPDLGE) form a disordered region. Polar residues predominate over residues 57–75 (ISTQVKSVTAQKSPITQET). A Phosphothreonine; by ATR and ATM modification is found at Thr72. The span at 76–88 (TKNDTERNKDVDK) shows a compositional bias: basic and acidic residues. A Phosphothreonine; by ATR and ATM modification is found at Thr113. Disordered stretches follow at residues 215-236 (IKTQNEGNSDKPPRARNNKGEK) and 277-303 (EKSSSSLDNQESSQQRLWTASQLPPEL). Residues 222 to 236 (NSDKPPRARNNKGEK) are compositionally biased toward basic and acidic residues. A compositionally biased stretch (low complexity) spans 277–291 (EKSSSSLDNQESSQQ). Phosphoserine; by ATR and ATM is present on Ser289. Thr319 bears the Phosphothreonine; by ATR and ATM mark. Residues Ser329 and Ser355 each carry the phosphoserine; by ATR and ATM modification.

This sequence belongs to the SLX4 family. As to quaternary structure, forms a heterodimer with SLX1. Interacts with RAD1; catalytic subunit of the RAD1-RAD10 endonuclease. Interacts with RTT107. Post-translationally, phosphorylated by ATR (MEC1) and ATM (TEL1) upon DNA damage. This appears to be required for the function with the RAD1-RAD10 endonuclease.

The protein resides in the nucleus. The protein localises to the cytoplasm. Functionally, regulatory subunit that interacts with and increases the activity of different structure-specific endonucleases. Has several distinct roles in protecting genome stability by resolving diverse forms of deleterious DNA structures. Component of the SLX1-SLX4 structure-specific endonuclease that resolves DNA secondary structures generated during DNA repair and recombination. Has endonuclease activity towards branched DNA substrates, introducing single-strand cuts in duplex DNA close to junctions with ss-DNA. Has a preference for simple Y, 5'-flap and replication fork-like structures. It cleaves the strand bearing the 5'-non-homologous arm at the branch site junction and generates ligatable, nicked products from the 5'-flap or replication fork substrates. Plays a critical role in maintaining the integrity of the ribosomal DNA (rDNA) loci, where it has a role in re-starting stalled replication forks. Has Holliday junction resolvase activity in vitro. Interacts with the structure-specific RAD1-RAD10 endonuclease and promotes RAD1-RAD10-dependent 3'-non-homologous tail removal (NHTR) during repair of double-strand breaks by single-strand annealing. SLX4 also promotes recovery from DNA-alkylation-induced replisome stalling during DNA replication by facilitating the error-free mode of lesion bypass. This does not require SLX1 or RAD1-RAD10, but probably RTT107. This Saccharomyces cerevisiae (strain YJM789) (Baker's yeast) protein is Structure-specific endonuclease subunit SLX4.